A 221-amino-acid polypeptide reads, in one-letter code: Octanoyltransferase (221 aa).

In terms of domain architecture, BPL/LPL catalytic spans 14 to 202; the sequence is GVRPDTLWFL…MLGARNAPHP (189 aa). Residues 54–61, 128–130, and 141–143 each bind substrate; these read RGGLLTYH, SIG, and GFA. C159 serves as the catalytic Acyl-thioester intermediate. The interval 197 to 221 is disordered; the sequence is RNAPHPPAPNLSSGDLGTGTRAGRT.

Belongs to the LipB family.

The protein resides in the cytoplasm. It carries out the reaction octanoyl-[ACP] + L-lysyl-[protein] = N(6)-octanoyl-L-lysyl-[protein] + holo-[ACP] + H(+). Its pathway is protein modification; protein lipoylation via endogenous pathway; protein N(6)-(lipoyl)lysine from octanoyl-[acyl-carrier-protein]: step 1/2. Its function is as follows. Catalyzes the transfer of endogenously produced octanoic acid from octanoyl-acyl-carrier-protein onto the lipoyl domains of lipoate-dependent enzymes. Lipoyl-ACP can also act as a substrate although octanoyl-ACP is likely to be the physiological substrate. This chain is Octanoyltransferase, found in Frankia casuarinae (strain DSM 45818 / CECT 9043 / HFP020203 / CcI3).